The sequence spans 612 residues: GNEIADSTVSLVKFIKPDPDAIFSSTCFGDTVSSDPAFSIPIKQESCKNTCSSALFKGSQSANPFPFMDGSYFAFMDDKDYYSLSGILGPPVSSFGDGFEGNGFSNQSLNVAIKQETEDSSFYPENNMPSSAIVGVNSCGQSFHYRIGAQGTISLSRPLNRDQSFQNLSSFPPMSSLVESWKTQSELAQNTLSSRRNDGFPVPGYIPENMSSTTLRSMSTGPSRPSKVCLVCGDEASGCHYGVVTCGSCKVFFKRAVEGKCSRQHSYLCAGRNDCIIDKIRRKNCPACRLQKCLQAGMNLGARKSKKLGKLKGVHEEHPQQPLQQTPTASPKEDTTLTSSSKEPSANSNSLVPLISAVSPAITLSAAVILENIEPEIVYAGYDNTQPDTAENLLSSLNQLAGKQMVQVVKWAKVIPGFRNLPLEDQITLIQYSWMCLSSFALSWRSYKHASSQFLYFAPDLIFNEERMRQSAMYDLCQGMQQISLEFSRLQLTFEEYTLMKVLLLLSTVPKDGLKCQAAFEEMRVNYIKELRKVLLKSPHNSGQSWQRYFQLTKLLDSMQDLVGDLLEFCFYTFRESQALKVEFPAMLVEIISDQLPKVESGIAKPLYFHRK.

The modulating stretch occupies residues 1 to 228 (GNEIADSTVS…STGPSRPSKV (228 aa)). Zn(2+) contacts are provided by C229, C232, C246, C249, C269, C275, C285, and C288. 2 consecutive NR C4-type zinc fingers follow at residues 229–249 (CLVC…CGSC) and 269–293 (CAGR…LQKC). Positions 229-298 (CLVCGDEASG…RLQKCLQAGM (70 aa)) form a DNA-binding region, nuclear receptor. The tract at residues 299–349 (NLGARKSKKLGKLKGVHEEHPQQPLQQTPTASPKEDTTLTSSSKEPSANSN) is hinge. Positions 310-348 (KLKGVHEEHPQQPLQQTPTASPKEDTTLTSSSKEPSANS) are disordered. Residues 339-348 (SSSKEPSANS) are compositionally biased toward low complexity. The NR LBD domain occupies 350-592 (SLVPLISAVS…EFPAMLVEII (243 aa)). Positions 398 and 404 each coordinate 21-hydroxyprogesterone. Aldosterone contacts are provided by N398 and Q404. Progesterone-binding residues include N398 and Q404. Residues 410–413 (KWAK) form an important for coactivator binding region. Positions 445 and 573 each coordinate 21-hydroxyprogesterone. Aldosterone is bound by residues R445 and T573. Residues R445 and T573 each coordinate progesterone.

Belongs to the nuclear hormone receptor family. NR3 subfamily.

The protein localises to the cytoplasm. It is found in the nucleus. Its function is as follows. Receptor for both mineralocorticoids (MC) such as aldosterone and glucocorticoids (GC) such as corticosterone or cortisol. Binds to mineralocorticoid response elements (MRE) and transactivates target genes. The effect of MC is to increase ion and water transport and thus raise extracellular fluid volume and blood pressure and lower potassium levels. This Xenopus laevis (African clawed frog) protein is Mineralocorticoid receptor (nr3c2).